A 322-amino-acid chain; its full sequence is Protein IRREGULAR XYLEM 15 (322 aa).

Residues 28–48 (LWLLAFVSFFTIVFLLTLLYT) form a helical membrane-spanning segment.

Expressed in rosette leaves, stems and siliques. Expressed in the xylem.

It localises to the golgi apparatus membrane. Functionally, required for xylan biosynthesis, but not directly involved in catalyzing the addition of sugars to the growing polymer. The sequence is that of Protein IRREGULAR XYLEM 15 (IRX15) from Arabidopsis thaliana (Mouse-ear cress).